The chain runs to 465 residues: Cysteine--tRNA ligase (465 aa).

Residue cysteine 27 participates in Zn(2+) binding. The 'HIGH' region motif lies at 29-39 (PTVYNFFHIGN). Zn(2+) contacts are provided by cysteine 207, histidine 232, and glutamate 236. The 'KMSKS' region signature appears at 264 to 268 (KMSKS). Residue lysine 267 participates in ATP binding.

The protein belongs to the class-I aminoacyl-tRNA synthetase family. In terms of assembly, monomer. Requires Zn(2+) as cofactor.

The protein resides in the cytoplasm. It carries out the reaction tRNA(Cys) + L-cysteine + ATP = L-cysteinyl-tRNA(Cys) + AMP + diphosphate. This chain is Cysteine--tRNA ligase, found in Clostridium botulinum (strain ATCC 19397 / Type A).